Consider the following 985-residue polypeptide: Rho guanine nucleotide exchange factor 2 (985 aa).

A disordered region spans residues 1–32 (MSRIESLTRARIDRSKEQATKTREKEKMKEAK). The Phorbol-ester/DAG-type zinc finger occupies 39-86 (GHLFTTISVSGMTMCYACNKSITAKEALICPTCNVTIHNRCKDTLANC). A phosphoserine mark is found at Ser109, Ser122, Ser129, Ser133, and Ser137. An interaction with DYNLT1 region spans residues 131 to 161 (RQSLLGSRRGLSSLSLAKSVSTTNIAGHFND). The residue at position 143 (Ser143) is a Phosphoserine; by PAK4. 5 positions are modified to phosphoserine: Ser151, Ser163, Ser172, Ser174, and Ser177. In terms of domain architecture, DH spans 236–433 (KKQDVIYELI…KELLSNVDQD (198 aa)). Lys354 is subject to N6-acetyllysine. The region spanning 473–572 (KLIHDGCLLW…WIRVIQQSVR (100 aa)) is the PH domain. The stretch at 591 to 615 (LRRIKTKLQQKNQALVELLQMNVEL) forms a coiled coil. A phosphoserine mark is found at Ser646 and Ser649. Thr680 carries the phosphothreonine; by MAPK1 or MAPK3 modification. Residues Ser692, Ser710, and Ser781 each carry the phosphoserine modification. Thr795 is subject to Phosphothreonine. The stretch at 797 to 866 (EKQATELALL…RQLAALGQNE (70 aa)) forms a coiled coil. At Ser885 the chain carries Phosphoserine. Disordered regions lie at residues 890-909 (DALYLSFNPPQPSRGHDRLD) and 918-985 (HRPF…ASES). At Tyr893 the chain carries Phosphotyrosine. The residue at position 895 (Ser895) is a Phosphoserine; by PAK4. A compositionally biased stretch (basic and acidic residues) spans 919–938 (RPFDDREAQELGSPEDRLQD). Ser931, Ser939, and Ser940 each carry phosphoserine. The span at 940–949 (SDPDTCSEEE) shows a compositional bias: acidic residues. Thr944 is modified (phosphothreonine). Residues Ser946, Ser951, Ser952, Ser955, and Ser959 each carry the phosphoserine modification.

Found in a complex composed at least of ARHGEF2, NOD2 and RIPK2. Interacts with RIPK2; the interaction mediates tyrosine phosphorylation of RIPK2 by Src kinase CSK. Interacts with RIPK1 and RIPK3. Interacts with YWHAZ/14-3-3 zeta; when phosphorylated at Ser-885. Interacts with the kinases PAK4, AURKA and MAPK1. Interacts with RHOA and RAC1. Interacts with NOD1. Interacts (via the N- terminal zinc finger) with CAPN6 (via domain II). Interacts with DYNLT1. In terms of processing, phosphorylation of Ser-885 by PAK1 induces binding to protein YWHAZ, promoting its relocation to microtubules and the inhibition of its activity. Phosphorylated by AURKA and CDK1 during mitosis, which negatively regulates its activity. Phosphorylation by MAPK1 or MAPK3 increases nucleotide exchange activity. Phosphorylation by PAK4 releases GEF-H1 from the microtubules. Phosphorylated on serine, threonine and tyrosine residues in a RIPK2-dependent manner.

It is found in the cytoplasm. It localises to the cytoskeleton. Its subcellular location is the cell junction. The protein localises to the tight junction. The protein resides in the golgi apparatus. It is found in the spindle. It localises to the cytoplasmic vesicle. Activates Rho-GTPases by promoting the exchange of GDP for GTP. May be involved in epithelial barrier permeability, cell motility and polarization, dendritic spine morphology, antigen presentation, leukemic cell differentiation, cell cycle regulation, innate immune response, and cancer. Binds Rac-GTPases, but does not seem to promote nucleotide exchange activity toward Rac-GTPases. May stimulate instead the cortical activity of Rac. Inactive toward CDC42, TC10, or Ras-GTPases. Forms an intracellular sensing system along with NOD1 for the detection of microbial effectors during cell invasion by pathogens. Involved in innate immune signaling transduction pathway promoting cytokine IL6/interleukin-6 and TNF-alpha secretion in macrophage upon stimulation by bacterial peptidoglycans; acts as a signaling intermediate between NOD2 receptor and RIPK2 kinase. Contributes to the tyrosine phosphorylation of RIPK2 through Src tyrosine kinase leading to NF-kappaB activation by NOD2. Overexpression activates Rho-, but not Rac-GTPases, and increases paracellular permeability. Involved in neuronal progenitor cell division and differentiation. Involved in the migration of precerebellar neurons. This is Rho guanine nucleotide exchange factor 2 (Arhgef2) from Rattus norvegicus (Rat).